Reading from the N-terminus, the 365-residue chain is Outer capsid protein sigma-3 (365 aa).

The segment at 51–73 (CMHCLGVVGSLQRKLKHLPHHRC) adopts a CCHC-type zinc-finger fold.

Belongs to the orthoreovirus sigma-3 protein family. In terms of assembly, heterohexamer of three sigma-3 and three Mu-1 proteins. The RNA-binding form is probably a homodimer. Cleaved during virus the endosomal proteolytic disassembly of the outer capsid.

It localises to the virion. Its function is as follows. Stimulates translation by blocking the activation of the dsRNA-dependent protein kinase EIF2AK2/PKR, thereby inhibiting the host interferon response. Sigma3 prevents the activation of EIF2AK2 by competing with the kinase for dsRNA-binding. In terms of biological role, the viral outer shell polypeptides, of which sigma-3 is one, impose structural constraints that prevent elongation of nascent transcripts by the RNA-dependent RNA polymerase lambda-3. The sequence is that of Outer capsid protein sigma-3 (S4) from Mammalia (T1L).